A 310-amino-acid polypeptide reads, in one-letter code: MLDANKLQQAVDQAYTQFHSLNGGQNADYIPFLANVPGQLAAVAIVTSDGNVYSAGDSDYRFALESISKVCTLALALEDVGPQAVQDKIGADPTGLPFNSVIALELHGGKPLSPLVNAGAIATTSLINAENAEQRWQRILHIQQQLAGELVALSDEVNQSEQTTNFHNRAIAWLLYSAGYLYCDAMEACDVYTRQCSTLINTVELATLGATLAAGGVNPLTHKRVLQADNVPYILAEMMMEGLYGRSGDWAYRVGLPGKSGVGGGILAVVPGVMGIAAFSPPLDEEGNSVRGQKMVASVAKQLGYNVFKG.

Substrate-binding residues include Ser66, Asn117, Glu161, Asn168, Tyr192, Tyr244, and Val262. Lys294 carries the N6-acetyllysine modification.

This sequence belongs to the glutaminase family. As to quaternary structure, homotetramer.

The catalysed reaction is L-glutamine + H2O = L-glutamate + NH4(+). This is Glutaminase 1 from Escherichia coli O157:H7.